A 217-amino-acid polypeptide reads, in one-letter code: Probable GTP-binding protein EngB (217 aa).

One can recognise an EngB-type G domain in the interval 33 to 217 (GPAEIAFAGR…RITIEQAVAR (185 aa)). GTP contacts are provided by residues 41 to 48 (GRSNVGKS), 68 to 72 (GRTQE), 95 to 98 (DMPG), 162 to 165 (TKTD), and 196 to 198 (TSS). Positions 48 and 70 each coordinate Mg(2+).

It belongs to the TRAFAC class TrmE-Era-EngA-EngB-Septin-like GTPase superfamily. EngB GTPase family. Mg(2+) serves as cofactor.

Necessary for normal cell division and for the maintenance of normal septation. This chain is Probable GTP-binding protein EngB, found in Sinorhizobium fredii (strain NBRC 101917 / NGR234).